The chain runs to 305 residues: 4-diphosphocytidyl-2-C-methyl-D-erythritol kinase (305 aa).

Residue Lys-18 is part of the active site. Position 103 to 113 (103 to 113 (PYGAGLGGGSS)) interacts with ATP. Asp-145 is an active-site residue.

This sequence belongs to the GHMP kinase family. IspE subfamily.

It carries out the reaction 4-CDP-2-C-methyl-D-erythritol + ATP = 4-CDP-2-C-methyl-D-erythritol 2-phosphate + ADP + H(+). It functions in the pathway isoprenoid biosynthesis; isopentenyl diphosphate biosynthesis via DXP pathway; isopentenyl diphosphate from 1-deoxy-D-xylulose 5-phosphate: step 3/6. Functionally, catalyzes the phosphorylation of the position 2 hydroxy group of 4-diphosphocytidyl-2C-methyl-D-erythritol. In Lawsonia intracellularis (strain PHE/MN1-00), this protein is 4-diphosphocytidyl-2-C-methyl-D-erythritol kinase.